Here is a 158-residue protein sequence, read N- to C-terminus: 2-C-methyl-D-erythritol 2,4-cyclodiphosphate synthase (158 aa).

Positions 10 and 12 each coordinate a divalent metal cation. 4-CDP-2-C-methyl-D-erythritol 2-phosphate-binding positions include Asp-10–His-12 and His-36–Ser-37. His-44 lines the a divalent metal cation pocket. Residues Asp-58 to Gly-60, Phe-63 to Asp-67, and Arg-144 each bind 4-CDP-2-C-methyl-D-erythritol 2-phosphate.

It belongs to the IspF family. In terms of assembly, homotrimer. A divalent metal cation serves as cofactor.

The catalysed reaction is 4-CDP-2-C-methyl-D-erythritol 2-phosphate = 2-C-methyl-D-erythritol 2,4-cyclic diphosphate + CMP. It participates in isoprenoid biosynthesis; isopentenyl diphosphate biosynthesis via DXP pathway; isopentenyl diphosphate from 1-deoxy-D-xylulose 5-phosphate: step 4/6. Functionally, involved in the biosynthesis of isopentenyl diphosphate (IPP) and dimethylallyl diphosphate (DMAPP), two major building blocks of isoprenoid compounds. Catalyzes the conversion of 4-diphosphocytidyl-2-C-methyl-D-erythritol 2-phosphate (CDP-ME2P) to 2-C-methyl-D-erythritol 2,4-cyclodiphosphate (ME-CPP) with a corresponding release of cytidine 5-monophosphate (CMP). This is 2-C-methyl-D-erythritol 2,4-cyclodiphosphate synthase from Burkholderia vietnamiensis (strain G4 / LMG 22486) (Burkholderia cepacia (strain R1808)).